Consider the following 202-residue polypeptide: MVGAVTQIADRPTDPSPWSPRETELLAVTLRLLQEHGYDRLTVDAVAASARASKATVYRRWPSKAELVLAAFIEGIRQVAVPPNTGNLRDDLLRLGELICREVGQHASTIRAVLVEVSRNPALNDVLQHQFVDHRKALIQYILQQAVDRGEISSAAISDELWDLLPGYLIFRSIIPNRPPTQDTVQALVDDVILPSLTRSTG.

The interval 1 to 20 (MVGAVTQIADRPTDPSPWSP) is disordered. The HTH tetR-type domain occupies 19–79 (SPRETELLAV…AAFIEGIRQV (61 aa)).

This is an uncharacterized protein from Mycobacterium bovis (strain ATCC BAA-935 / AF2122/97).